The primary structure comprises 131 residues: Small ribosomal subunit protein uS8 (131 aa).

Belongs to the universal ribosomal protein uS8 family. As to quaternary structure, part of the 30S ribosomal subunit. Contacts proteins S5 and S12.

Its function is as follows. One of the primary rRNA binding proteins, it binds directly to 16S rRNA central domain where it helps coordinate assembly of the platform of the 30S subunit. The chain is Small ribosomal subunit protein uS8 from Acidithiobacillus ferrooxidans (strain ATCC 23270 / DSM 14882 / CIP 104768 / NCIMB 8455) (Ferrobacillus ferrooxidans (strain ATCC 23270)).